Reading from the N-terminus, the 421-residue chain is UPF0300 protein C737.04 (421 aa).

The protein belongs to the UPF0300 family.

The protein resides in the cytoplasm. The chain is UPF0300 protein C737.04 from Schizosaccharomyces pombe (strain 972 / ATCC 24843) (Fission yeast).